Here is a 482-residue protein sequence, read N- to C-terminus: Adenylosuccinate lyase (482 aa).

Substrate-binding positions include 14–15 (RY), 82–84 (RHD), and 108–109 (TS). Residue histidine 156 is the Proton donor/acceptor of the active site. A substrate-binding site is contributed by glutamine 238. Serine 286 serves as the catalytic Proton donor/acceptor. Substrate is bound by residues arginine 300, arginine 326, serine 331, and arginine 335.

The protein belongs to the lyase 1 family. Adenylosuccinate lyase subfamily. In terms of assembly, homotetramer. Residues from neighboring subunits contribute catalytic and substrate-binding residues to each active site.

The catalysed reaction is N(6)-(1,2-dicarboxyethyl)-AMP = fumarate + AMP. The enzyme catalyses (2S)-2-[5-amino-1-(5-phospho-beta-D-ribosyl)imidazole-4-carboxamido]succinate = 5-amino-1-(5-phospho-beta-D-ribosyl)imidazole-4-carboxamide + fumarate. It participates in purine metabolism; AMP biosynthesis via de novo pathway; AMP from IMP: step 2/2. The protein operates within purine metabolism; IMP biosynthesis via de novo pathway; 5-amino-1-(5-phospho-D-ribosyl)imidazole-4-carboxamide from 5-amino-1-(5-phospho-D-ribosyl)imidazole-4-carboxylate: step 2/2. This chain is Adenylosuccinate lyase (ade8), found in Schizosaccharomyces pombe (strain 972 / ATCC 24843) (Fission yeast).